The chain runs to 333 residues: Cell division protein FtsQ (333 aa).

The disordered stretch occupies residues 1–99 (MTGTGPHGDP…ARREAKRRAV (99 aa)). Topologically, residues 1-118 (MTGTGPHGDP…VPRNTIRGLK (118 aa)) are cytoplasmic. The segment covering 11–22 (AEDPAGPDDTAA) has biased composition (acidic residues). Residues 44-57 (TTETTAQTGTTAEA) show a composition bias toward low complexity. Positions 73–92 (ERAERRAARDRAMAIEQARR) are enriched in basic and acidic residues. Residues 119–139 (VLMWAALVSVLAVALGLLLYF) form a helical membrane-spanning segment. Over 140–333 (TPIMSARNVE…VSSPDLPTVK (194 aa)) the chain is Extracellular. In terms of domain architecture, POTRA spans 143–211 (MSARNVEVSG…STLKISIVER (69 aa)).

This sequence belongs to the FtsQ/DivIB family. FtsQ subfamily.

The protein resides in the cell membrane. Functionally, essential cell division protein. The sequence is that of Cell division protein FtsQ from Mycolicibacterium smegmatis (strain ATCC 700084 / mc(2)155) (Mycobacterium smegmatis).